The primary structure comprises 598 residues: Nuclear receptor subfamily 4 group A member 1 (598 aa).

Disordered stretches follow at residues 1 to 43 and 128 to 151; these read MPCI…PEAA and GSDY…PPQL. Over residues 134–145 the composition is skewed to low complexity; the sequence is SPCSAPSPSTPS. A required for nuclear import region spans residues 171 to 466; sequence RAWTEQLPKA…PAEGKLIFCS (296 aa). Positions 264-339 form a DNA-binding region, nuclear receptor; the sequence is EGRCAVCGDN…VGMVKEVVRT (76 aa). NR C4-type zinc fingers lie at residues 267–287 and 303–327; these read CAVC…CEGC and CLAN…FQKC. The segment at 268 to 354 is required for binding NBRE-containing DNA; it reads AVCGDNASCQ…RRGRLPSKPK (87 aa). Residues 299-361 are required for the interaction with RXRA; that stretch reads AKYICLANKD…KPKQPPETSP (63 aa). Ser-341 is subject to Phosphoserine; by PKA. A disordered region spans residues 341-361; it reads SLKGRRGRLPSKPKQPPETSP. Residue Ser-351 is modified to Phosphoserine; by PKA, RPS6KA1 and RPS6KA3. The region spanning 360 to 595 is the NR LBD domain; the sequence is SPAHLLTSLV…PIVDKIFMDT (236 aa). The segment at 521 to 544 is binds lipopolysaccharide; it reads PRRVEELQNRIASCLKEHVSAEAG. The interval 584 to 595 is AF-2; sequence PPPIVDKIFMDT.

It belongs to the nuclear hormone receptor family. NR4 subfamily. Binds the NGFI-B response element (NBRE) as a monomer. Binds the Nur response element (NurRE), consisting of two inverse NBRE-related octanucleotide repeats separated by 6 base-pairs, as a dimer. Interacts (via N-terminus) with NLRP3 (via LRR repeat domain); the interaction is direct, requires binding of NR4A1/Nur77 to NBRE-containing dsDNA and lipopolysaccharide, and leads to non-canonical NLRP3 inflammasome activation. Interacts with GADD45GIP1. Interacts with STK11. Interacts with IFI27. Heterodimer (via DNA-binding domain) with RXRA (via C-terminus); DNA-binding of the heterodimer is enhanced by 9-cis retinoic acid. Competes for the RXRA interaction with EP300 and thereby attenuates EP300 mediated acetylation of RXRA. Interacts with NCOA1. Interacts with NCOA2. Interacts with NCOA3. Requires Zn(2+) as cofactor. In terms of processing, phosphorylated at Ser-351 by RPS6KA1 and RPS6KA3 in response to mitogenic or stress stimuli. Post-translationally, acetylated by p300/CBP, acetylation increases stability. Deacetylated by HDAC1.

Its subcellular location is the nucleus. The protein resides in the cytoplasm. It is found in the cytosol. It localises to the mitochondrion. Orphan nuclear receptor. Binds the NGFI-B response element (NBRE) 5'-AAAGGTCA-3'. Binds 9-cis-retinoic acid outside of its ligand-binding (NR LBD) domain. Participates in energy homeostasis by sequestrating the kinase STK11 in the nucleus, thereby attenuating cytoplasmic AMPK activation. Regulates the inflammatory response in macrophages by regulating metabolic adaptations during inflammation, including repressing the transcription of genes involved in the citric acid cycle (TCA). Inhibits NF-kappa-B signaling by binding to low-affinity NF-kappa-B binding sites, such as at the IL2 promoter. May act concomitantly with NR4A2 in regulating the expression of delayed-early genes during liver regeneration. Plays a role in the vascular response to injury. Functionally, in the cytosol, upon its detection of both bacterial lipopolysaccharide (LPS) and NBRE-containing mitochondrial DNA released by GSDMD pores during pyroptosis, it promotes non-canonical NLRP3 inflammasome activation by stimulating association of NLRP3 and NEK7. The chain is Nuclear receptor subfamily 4 group A member 1 (NR4A1) from Bos taurus (Bovine).